Reading from the N-terminus, the 182-residue chain is Large ribosomal subunit protein uL6 (182 aa).

The protein belongs to the universal ribosomal protein uL6 family. Part of the 50S ribosomal subunit.

This protein binds to the 23S rRNA, and is important in its secondary structure. It is located near the subunit interface in the base of the L7/L12 stalk, and near the tRNA binding site of the peptidyltransferase center. The protein is Large ribosomal subunit protein uL6 of Caldicellulosiruptor bescii (strain ATCC BAA-1888 / DSM 6725 / KCTC 15123 / Z-1320) (Anaerocellum thermophilum).